A 796-amino-acid polypeptide reads, in one-letter code: Polyribonucleotide nucleotidyltransferase (796 aa).

Residues aspartate 490 and aspartate 496 each coordinate Mg(2+). The KH domain occupies 557–616; it reads PRIESIFINKDKIRNVIGSGGKNIRDICEKTGAKIEIIQDGTVMIYAVNNEAVEYAKSMI. An S1 motif domain is found at 626–693; the sequence is GKVFEGTVVE…DREHIQLSMR (68 aa). Composition is skewed to low complexity over residues 717–728, 747–759, and 769–784; these read DDSCGSTGGSSF, GGSS…NSNG, and SSNG…SNSR. A disordered region spans residues 717 to 796; the sequence is DDSCGSTGGS…HDVPRKPRFF (80 aa). A compositionally biased stretch (basic and acidic residues) spans 785–796; that stretch reads NGHDVPRKPRFF.

Belongs to the polyribonucleotide nucleotidyltransferase family. Mg(2+) serves as cofactor.

The protein resides in the cytoplasm. The catalysed reaction is RNA(n+1) + phosphate = RNA(n) + a ribonucleoside 5'-diphosphate. Involved in mRNA degradation. Catalyzes the phosphorolysis of single-stranded polyribonucleotides processively in the 3'- to 5'-direction. The protein is Polyribonucleotide nucleotidyltransferase of Ehrlichia chaffeensis (strain ATCC CRL-10679 / Arkansas).